The sequence spans 121 residues: Large ribosomal subunit protein uL22 (121 aa).

The protein belongs to the universal ribosomal protein uL22 family. In terms of assembly, part of the 50S ribosomal subunit.

Its function is as follows. This protein binds specifically to 23S rRNA; its binding is stimulated by other ribosomal proteins, e.g. L4, L17, and L20. It is important during the early stages of 50S assembly. It makes multiple contacts with different domains of the 23S rRNA in the assembled 50S subunit and ribosome. The globular domain of the protein is located near the polypeptide exit tunnel on the outside of the subunit, while an extended beta-hairpin is found that lines the wall of the exit tunnel in the center of the 70S ribosome. In Synechocystis sp. (strain ATCC 27184 / PCC 6803 / Kazusa), this protein is Large ribosomal subunit protein uL22.